The primary structure comprises 129 residues: MSYAIIETGGKQIRVEPGRYYDIELLPVDEQSTHTIDKVLLIHDEDDISIGQPFIEGATVEGTVIQHRRGKKVIVYKMRPKKKTRKKRGHRQEITRFMIDSINYNGKTLVATAATSSAEVVEDSSDEEE.

This sequence belongs to the bacterial ribosomal protein bL21 family. Part of the 50S ribosomal subunit. Contacts protein L20.

In terms of biological role, this protein binds to 23S rRNA in the presence of protein L20. The polypeptide is Large ribosomal subunit protein bL21 (Microcystis aeruginosa (strain NIES-843 / IAM M-2473)).